A 310-amino-acid polypeptide reads, in one-letter code: Putative S-adenosyl-L-methionine-dependent methyltransferase MMAR_3534 (310 aa).

S-adenosyl-L-methionine contacts are provided by residues Asp131 and 160 to 161; that span reads DL.

Belongs to the UPF0677 family.

Its function is as follows. Exhibits S-adenosyl-L-methionine-dependent methyltransferase activity. This chain is Putative S-adenosyl-L-methionine-dependent methyltransferase MMAR_3534, found in Mycobacterium marinum (strain ATCC BAA-535 / M).